Reading from the N-terminus, the 37-residue chain is DRQIDMEEQQLEKLNKQDRXPGLRYAAKQQMXTXRMG.

Its subcellular location is the secreted. In terms of biological role, possesses antifungal activity against P.infestans but not F.graminearum. The protein is Antifungal protein 4 of Malva parviflora (Little mallow).